A 318-amino-acid polypeptide reads, in one-letter code: NADH-ubiquinone oxidoreductase chain 1 (318 aa).

8 helical membrane passes run 2–22, 70–90, 100–120, 146–166, 171–191, 222–242, 253–273, and 294–314; these read FTINILLLIIPILLAVAFLTL, MFIIAPIMALTLALTMWVPLP, LGVLFMLAMSSLAVYSILWSG, LAIILLSVLLMNGSFTLSTLI, HLWLIFPSWPLTMMWFISTLA, LFFMAEYTNIIMMNAFTTILF, ELYTVNFTIKTLLLTISFLWI, and LPLTLALCMWHVSLPITMSSI.

This sequence belongs to the complex I subunit 1 family.

It is found in the mitochondrion inner membrane. The enzyme catalyses a ubiquinone + NADH + 5 H(+)(in) = a ubiquinol + NAD(+) + 4 H(+)(out). In terms of biological role, core subunit of the mitochondrial membrane respiratory chain NADH dehydrogenase (Complex I) that is believed to belong to the minimal assembly required for catalysis. Complex I functions in the transfer of electrons from NADH to the respiratory chain. The immediate electron acceptor for the enzyme is believed to be ubiquinone. This is NADH-ubiquinone oxidoreductase chain 1 (MT-ND1) from Rhinoceros unicornis (Greater Indian rhinoceros).